The sequence spans 800 residues: Putative antiporter subunit mnhA2 (800 aa).

20 helical membrane passes run 1 to 21 (MSLVYLLIAILVIMAMILLMS), 33 to 53 (IALVAPVISSIYFLIQIPSVA), 78 to 98 (GLSLMFSLIISLIGIAVFFYA), 118 to 138 (LFMFSMIGIVLSDNTILMYIF), 167 to 187 (FMITVFGGLALLVGFIMLYIM), 207 to 227 (GLFIPMIFMFLLGAFTKSAQF), 241 to 261 (TPVSAYLHSATMVKAGIFLLL), 273 to 293 (YVYIVTFVGLITMLFGSITAL), 300 to 320 (GILAYSTISQLGMIMAMVGIG), 331 to 351 (IASIYVFVLFGALFHLMNHAI), 387 to 407 (LVMTIAALSMAGVPFLNGFLS), 424 to 444 (FSLISMIAIVFVGVIASVFTF), 472 to 492 (PWLFSLPSLILMVLVPVIFFV), 527 to 547 (GFNIPLLLTIIIILLGSVLAI), 595 to 615 (IIMTLGIFMIIIGYGYIRIGL), 627 to 647 (GALEIILAIVTVTIGISLIFI), 651 to 671 (LTMVILNGVIGFVVTLFFIAM), 676 to 696 (LALTQLVVETITTILFIVSFS), 712 to 732 (IIKISVSLLMALIVVSLIFIT), and 768 to 788 (LDTLFEGLVLIITGLGIYTLL).

It belongs to the CPA3 antiporters (TC 2.A.63) subunit A family. As to quaternary structure, may form a heterooligomeric complex that consists of seven subunits: mnhA2, mnhB2, mnhC2, mnhD2, mnhE2, mnhF2 and mnhG2.

Its subcellular location is the cell membrane. This Staphylococcus aureus (strain USA300) protein is Putative antiporter subunit mnhA2 (mnhA2).